A 504-amino-acid chain; its full sequence is Glycine--tRNA ligase (504 aa).

R99 and E189 together coordinate substrate. ATP contacts are provided by residues 221 to 223 (RNE), 231 to 236 (FRVREL), 306 to 307 (EI), and 365 to 368 (GVDR). 236–240 (LEQME) lines the substrate pocket. 361–365 (EPSAG) provides a ligand contact to substrate.

It belongs to the class-II aminoacyl-tRNA synthetase family. Homodimer.

Its subcellular location is the cytoplasm. The catalysed reaction is tRNA(Gly) + glycine + ATP = glycyl-tRNA(Gly) + AMP + diphosphate. Functionally, catalyzes the attachment of glycine to tRNA(Gly). This is Glycine--tRNA ligase from Deinococcus geothermalis (strain DSM 11300 / CIP 105573 / AG-3a).